Consider the following 446-residue polypeptide: Histidine--tRNA ligase (446 aa).

The protein belongs to the class-II aminoacyl-tRNA synthetase family. In terms of assembly, homodimer.

It localises to the cytoplasm. The enzyme catalyses tRNA(His) + L-histidine + ATP = L-histidyl-tRNA(His) + AMP + diphosphate + H(+). The polypeptide is Histidine--tRNA ligase (Burkholderia lata (strain ATCC 17760 / DSM 23089 / LMG 22485 / NCIMB 9086 / R18194 / 383)).